The primary structure comprises 343 residues: Dual-specificity RNA methyltransferase RlmN (343 aa).

Glu-92 acts as the Proton acceptor in catalysis. The Radical SAM core domain occupies 98–325 (DEDRTTLCIS…VITRSSRGSD (228 aa)). Cys-105 and Cys-330 are oxidised to a cystine. The [4Fe-4S] cluster site is built by Cys-112, Cys-116, and Cys-119. S-adenosyl-L-methionine contacts are provided by residues 157 to 158 (GE), Ser-189, 211 to 213 (SLN), and Asn-287. Cys-330 serves as the catalytic S-methylcysteine intermediate.

It belongs to the radical SAM superfamily. RlmN family. The cofactor is [4Fe-4S] cluster.

The protein resides in the cytoplasm. It carries out the reaction adenosine(2503) in 23S rRNA + 2 reduced [2Fe-2S]-[ferredoxin] + 2 S-adenosyl-L-methionine = 2-methyladenosine(2503) in 23S rRNA + 5'-deoxyadenosine + L-methionine + 2 oxidized [2Fe-2S]-[ferredoxin] + S-adenosyl-L-homocysteine. It catalyses the reaction adenosine(37) in tRNA + 2 reduced [2Fe-2S]-[ferredoxin] + 2 S-adenosyl-L-methionine = 2-methyladenosine(37) in tRNA + 5'-deoxyadenosine + L-methionine + 2 oxidized [2Fe-2S]-[ferredoxin] + S-adenosyl-L-homocysteine. Specifically methylates position 2 of adenine 2503 in 23S rRNA and position 2 of adenine 37 in tRNAs. m2A2503 modification seems to play a crucial role in the proofreading step occurring at the peptidyl transferase center and thus would serve to optimize ribosomal fidelity. This chain is Dual-specificity RNA methyltransferase RlmN, found in Geotalea uraniireducens (strain Rf4) (Geobacter uraniireducens).